A 348-amino-acid chain; its full sequence is Macrophage-capping protein (348 aa).

Residue Met1 is modified to N-acetylmethionine. The stretch at 27-75 is one Gelsolin-like 1 repeat; sequence EKLKPVPVAQENQGVFFSGDSYLVLHNGPEEVSHLHLWIGQQSSRDEQG. The short motif at 137–146 is the Nuclear localization signal element; the sequence is KKLYQVKGKK. 2 Gelsolin-like repeats span residues 148–188 and 261–307; these read IRAT…LERN and MNLT…KERQ. Position 337 is a phosphoserine (Ser337).

The protein belongs to the villin/gelsolin family. In terms of assembly, interacts with NUP62. Interacts with NUTF2 and RAN; involved in CAPG nuclear import. The N-terminus is blocked. In terms of tissue distribution, macrophages and macrophage-like cells.

The protein localises to the nucleus. It is found in the cytoplasm. The protein resides in the melanosome. It localises to the cell projection. Its subcellular location is the lamellipodium. The protein localises to the ruffle. Its function is as follows. Calcium-sensitive protein which reversibly blocks the barbed ends of actin filaments but does not sever preformed actin filaments. May play an important role in macrophage function. May play a role in regulating cytoplasmic and/or nuclear structures through potential interactions with actin. May bind DNA. This chain is Macrophage-capping protein (CAPG), found in Homo sapiens (Human).